The following is a 378-amino-acid chain: Cln5-like protein 1 (378 aa).

The N-terminal stretch at 1–20 (MNKIIIFILFLISILQSVRG) is a signal peptide. N-linked (GlcNAc...) asparagine glycans are attached at residues Asn63, Asn93, Asn135, Asn181, Asn220, Asn226, Asn254, and Asn280. A helical transmembrane segment spans residues 308–328 (WIFIIILLSFTTVYLVGGILI).

Belongs to the CLN5 family.

It is found in the membrane. This chain is Cln5-like protein 1 (cln5la), found in Dictyostelium discoideum (Social amoeba).